We begin with the raw amino-acid sequence, 362 residues long: Fructose-bisphosphate aldolase (362 aa).

S63 is a binding site for D-glyceraldehyde 3-phosphate. D112 acts as the Proton donor in catalysis. Residues H113, D147, E177, and H229 each coordinate Zn(2+). G230 provides a ligand contact to dihydroxyacetone phosphate. H268 is a Zn(2+) binding site. Dihydroxyacetone phosphate is bound by residues 269 to 271 (GGS) and 290 to 293 (NVDT).

It belongs to the class II fructose-bisphosphate aldolase family. In terms of assembly, homodimer. The cofactor is Zn(2+).

It carries out the reaction beta-D-fructose 1,6-bisphosphate = D-glyceraldehyde 3-phosphate + dihydroxyacetone phosphate. It functions in the pathway carbohydrate degradation; glycolysis; D-glyceraldehyde 3-phosphate and glycerone phosphate from D-glucose: step 4/4. Functionally, catalyzes the aldol condensation of dihydroxyacetone phosphate (DHAP or glycerone-phosphate) with glyceraldehyde 3-phosphate (G3P) to form fructose 1,6-bisphosphate (FBP) in gluconeogenesis and the reverse reaction in glycolysis. The polypeptide is Fructose-bisphosphate aldolase (fba) (Neurospora crassa (strain ATCC 24698 / 74-OR23-1A / CBS 708.71 / DSM 1257 / FGSC 987)).